We begin with the raw amino-acid sequence, 213 residues long: N-(5'-phosphoribosyl)anthranilate isomerase (213 aa).

Belongs to the TrpF family.

The catalysed reaction is N-(5-phospho-beta-D-ribosyl)anthranilate = 1-(2-carboxyphenylamino)-1-deoxy-D-ribulose 5-phosphate. It functions in the pathway amino-acid biosynthesis; L-tryptophan biosynthesis; L-tryptophan from chorismate: step 3/5. The chain is N-(5'-phosphoribosyl)anthranilate isomerase from Rhodopseudomonas palustris (strain TIE-1).